We begin with the raw amino-acid sequence, 457 residues long: MFEEPEWVEAAPAIVGLRPVTTQVQAATAPPVKGRKRRHLLATLRALEAASLSQQCPSLPGSDSEEEEEVGRKKRHFQRSSLANVSKEVGKKRKGKCQKQAPFISDSEGKEVERTCHRQAPPLGGISAGEEKGKRKCQEYSYLHPTQSLNSVDQTVHNSRTSTATLDPPKSSRESASPNSSHTLSRKQWRNRQKNKRRHKNKFRPLETQDQVPLKASIEETEVPPAPKSDSQETRAGALRARMTQRLDGARFRYLNEQLYSGPSSAAQCLFQEDPEAFLLYHRGFQRQVKKWPLHPVDRIAKDLRQKPASLVVADFGCGDCRLASSVRNPVHCFDLAALDPRVTVCDMAQVPLEDESVDVAVFCLSLMGTNIRDFLEEANRVLKPGGLLKVAEVSSRFEDIRTFLGAVTKLGFKVIYKDLTNSHFFLFDFEKTGPPRVGPKAQLSGLKLQPCLYKHR.

2 disordered regions span residues 52–114 (LSQQ…EVER) and 148–235 (SLNS…QETR). Residues Ser-62, Ser-64, and Ser-105 each carry the phosphoserine modification. Over residues 148-165 (SLNSVDQTVHNSRTSTAT) the composition is skewed to polar residues. Phosphoserine is present on residues Ser-172 and Ser-177. Polar residues predominate over residues 174–183 (ESASPNSSHT). Residues 184–203 (LSRKQWRNRQKNKRRHKNKF) are compositionally biased toward basic residues. S-adenosyl-L-methionine is bound by residues His-282, Gly-317, Asp-335, Asp-347, Met-348, and Cys-364.

The protein belongs to the methyltransferase superfamily. RRP8 family. In terms of assembly, component of the eNoSC complex, composed of SIRT1, SUV39H1 and RRP8.

The protein resides in the nucleus. It is found in the nucleolus. In terms of biological role, essential component of the eNoSC (energy-dependent nucleolar silencing) complex, a complex that mediates silencing of rDNA in response to intracellular energy status and acts by recruiting histone-modifying enzymes. The eNoSC complex is able to sense the energy status of cell: upon glucose starvation, elevation of NAD(+)/NADP(+) ratio activates SIRT1, leading to histone H3 deacetylation followed by dimethylation of H3 at 'Lys-9' (H3K9me2) by SUV39H1 and the formation of silent chromatin in the rDNA locus. In the complex, RRP8 binds to H3K9me2 and probably acts as a methyltransferase. Its substrates are however unknown. The chain is Ribosomal RNA-processing protein 8 (Rrp8) from Rattus norvegicus (Rat).